The primary structure comprises 544 residues: MAAKDVQFGNEVRQKMVNGVNILANAVRVTLGPKGRNVVVDRAFGGPHITKDGVTVAKEIELKDKFENMGAQMVKEVASKTNDVAGDGTTTATVLAQSIVAEGMKYVTAGMNPTDLKRGIDKAVAALVEELKNIAKPCDTSKEIAQVGSISANSDEQVGAIIAEAMEKVGKEGVITVEDGKSLENELDVVEGMQFDRGYLSPYFINDAEKQIAGLDNPFVLLFDKKISNIRDLLPVLEQVAKASRPLLIIAEDVEGEALATLVVNNIRGILKTVAVKAPGFGDRRKAMLQDIAILTGGVVISEEVGLSLEKATLDDLGQAKRIEIGKENTTVIDGFGDAAQIEARVAEIRQQIETATSDYDKEKLQERVAKLAGGVAVIKVGAATEVEMKEKKDRVEDALHATRAAVEEGVVAGGGVALLRARAALENLHTGNADQDAGVQIVLRAVESPLRQIVANAGGEPSVVVNKVLEGKGNYGYNAGSGEYGDMIGMGVLDPAKVTRSALQHAASIAGLMLTTDCMIAEIPEEKPAVPDMGGMGGMGGMM.

Residues 30-33 (TLGP), Lys51, 87-91 (DGTTT), Gly415, and Asp495 contribute to the ATP site.

Belongs to the chaperonin (HSP60) family. Forms a cylinder of 14 subunits composed of two heptameric rings stacked back-to-back. Interacts with the co-chaperonin GroES.

It is found in the cytoplasm. The catalysed reaction is ATP + H2O + a folded polypeptide = ADP + phosphate + an unfolded polypeptide.. In terms of biological role, together with its co-chaperonin GroES, plays an essential role in assisting protein folding. The GroEL-GroES system forms a nano-cage that allows encapsulation of the non-native substrate proteins and provides a physical environment optimized to promote and accelerate protein folding. This chain is Chaperonin GroEL, found in Neisseria gonorrhoeae (strain ATCC 700825 / FA 1090).